Consider the following 199-residue polypeptide: Large ribosomal subunit protein bL25 (199 aa).

This sequence belongs to the bacterial ribosomal protein bL25 family. CTC subfamily. As to quaternary structure, part of the 50S ribosomal subunit; part of the 5S rRNA/L5/L18/L25 subcomplex. Contacts the 5S rRNA. Binds to the 5S rRNA independently of L5 and L18.

This is one of the proteins that binds to the 5S RNA in the ribosome where it forms part of the central protuberance. The protein is Large ribosomal subunit protein bL25 of Rickettsia akari (strain Hartford).